A 585-amino-acid polypeptide reads, in one-letter code: MVDHVSENSTNVLSAKRKLTEPSLIDSKRVFPCDQCAKRFTRHENLTRHKACHSKAEPIPCPYCEIKCKRKDLLKRHIQRFHNDKSVIEEGSKDVLDVKAAASQQEDNMKIVLPSFDAIDVPKAYHPSLRPYFTILPLIPSDFLEHYIEGYFEWFHPVFPFIHQASFNSENVAASFLRSLVVIACLCTGIESDFSMALLFWDSGFHVLQLYLQGDPERVKKAWVFQSRLLFCTASLFEKTACFSGIGHVLLKDLVHESRTFGWTKLNWSVEGDTDISNLIDLECIRRSVFCLYILEWFLALIFNKPPSLSVLELQMPLPISSALWSSKELLSKDYWRPNPLNPRDALSILVNGPLLLEETNISGFVLLFAIFEFIRDEAKLSMIGLPRQPNRSYEIMLQHLKVSMELSNPCAKTSSIFLCLWHLVLTYYYLPDPLFLRSITLTDLESATSYFKDDSWMDDDYISPCMTTYNLTMGWENVIWGLRYAETELTKFKFDLPVPHLTLFRIFLQGLYALRDFDQISTSSLQTFTMLWKKLSTSLNMKEDAQNTAPSTCVKEFSAFVASALDVEGGWGIGPLLTKAFRPT.

C2H2-type zinc fingers lie at residues 31-53 (FPCD…KACH) and 59-82 (IPCP…QRFH). The residue at position 553 (Thr553) is a Phosphothreonine.

The protein resides in the nucleus. This chain is Zinc finger protein C11D3.17, found in Schizosaccharomyces pombe (strain 972 / ATCC 24843) (Fission yeast).